Here is a 1193-residue protein sequence, read N- to C-terminus: DNA-directed RNA polymerase subunit beta (1193 aa).

The tract at residues 1173–1193 (QQAKEAAELEKAKEEALDKTE) is disordered. Over residues 1177–1193 (EAAELEKAKEEALDKTE) the composition is skewed to basic and acidic residues.

This sequence belongs to the RNA polymerase beta chain family. The RNAP catalytic core consists of 2 alpha, 1 beta, 1 beta' and 1 omega subunit. When a sigma factor is associated with the core the holoenzyme is formed, which can initiate transcription.

The enzyme catalyses RNA(n) + a ribonucleoside 5'-triphosphate = RNA(n+1) + diphosphate. Its function is as follows. DNA-dependent RNA polymerase catalyzes the transcription of DNA into RNA using the four ribonucleoside triphosphates as substrates. In Streptococcus thermophilus (strain CNRZ 1066), this protein is DNA-directed RNA polymerase subunit beta.